A 238-amino-acid polypeptide reads, in one-letter code: Large ribosomal subunit protein bL17m (238 aa).

The protein belongs to the bacterial ribosomal protein bL17 family. Component of the mitochondrial large ribosomal subunit (mt-LSU). Mature yeast 74S mitochondrial ribosomes consist of a small (37S) and a large (54S) subunit. The 37S small subunit contains a 15S ribosomal RNA (15S mt-rRNA) and 34 different proteins. The 54S large subunit contains a 21S rRNA (21S mt-rRNA) and 46 different proteins.

Its subcellular location is the mitochondrion. Its function is as follows. Component of the mitochondrial ribosome (mitoribosome), a dedicated translation machinery responsible for the synthesis of mitochondrial genome-encoded proteins, including at least some of the essential transmembrane subunits of the mitochondrial respiratory chain. The mitoribosomes are attached to the mitochondrial inner membrane and translation products are cotranslationally integrated into the membrane. The protein is Large ribosomal subunit protein bL17m (MRPL8) of Saccharomyces cerevisiae (strain ATCC 204508 / S288c) (Baker's yeast).